The following is a 665-amino-acid chain: tRNA 5-methylaminomethyl-2-thiouridine biosynthesis bifunctional protein MnmC (665 aa).

The interval 1–235 (MTITRHAQID…KWEVLRGTFI (235 aa)) is tRNA (mnm(5)s(2)U34)-methyltransferase. Residues 266–665 (IGAGLAGCAT…RGKGKQTVGH (400 aa)) form an FAD-dependent cmnm(5)s(2)U34 oxidoreductase region.

The protein in the N-terminal section; belongs to the methyltransferase superfamily. tRNA (mnm(5)s(2)U34)-methyltransferase family. This sequence in the C-terminal section; belongs to the DAO family. FAD serves as cofactor.

The protein localises to the cytoplasm. It carries out the reaction 5-aminomethyl-2-thiouridine(34) in tRNA + S-adenosyl-L-methionine = 5-methylaminomethyl-2-thiouridine(34) in tRNA + S-adenosyl-L-homocysteine + H(+). Functionally, catalyzes the last two steps in the biosynthesis of 5-methylaminomethyl-2-thiouridine (mnm(5)s(2)U) at the wobble position (U34) in tRNA. Catalyzes the FAD-dependent demodification of cmnm(5)s(2)U34 to nm(5)s(2)U34, followed by the transfer of a methyl group from S-adenosyl-L-methionine to nm(5)s(2)U34, to form mnm(5)s(2)U34. This is tRNA 5-methylaminomethyl-2-thiouridine biosynthesis bifunctional protein MnmC from Pseudomonas syringae pv. syringae (strain B728a).